A 373-amino-acid polypeptide reads, in one-letter code: Dual-specificity RNA methyltransferase RlmN (373 aa).

The Proton acceptor role is filled by Glu-94. The Radical SAM core domain maps to 100 to 339; it reads EDDRATLCVS…VTIRKTRGDD (240 aa). A disulfide bridge links Cys-107 with Cys-344. [4Fe-4S] cluster-binding residues include Cys-114, Cys-118, and Cys-121. S-adenosyl-L-methionine is bound by residues 168–169, Ser-200, 222–224, and Asn-301; these read GE and SLH. Catalysis depends on Cys-344, which acts as the S-methylcysteine intermediate.

Belongs to the radical SAM superfamily. RlmN family. [4Fe-4S] cluster is required as a cofactor.

Its subcellular location is the cytoplasm. It carries out the reaction adenosine(2503) in 23S rRNA + 2 reduced [2Fe-2S]-[ferredoxin] + 2 S-adenosyl-L-methionine = 2-methyladenosine(2503) in 23S rRNA + 5'-deoxyadenosine + L-methionine + 2 oxidized [2Fe-2S]-[ferredoxin] + S-adenosyl-L-homocysteine. It catalyses the reaction adenosine(37) in tRNA + 2 reduced [2Fe-2S]-[ferredoxin] + 2 S-adenosyl-L-methionine = 2-methyladenosine(37) in tRNA + 5'-deoxyadenosine + L-methionine + 2 oxidized [2Fe-2S]-[ferredoxin] + S-adenosyl-L-homocysteine. Specifically methylates position 2 of adenine 2503 in 23S rRNA and position 2 of adenine 37 in tRNAs. m2A2503 modification seems to play a crucial role in the proofreading step occurring at the peptidyl transferase center and thus would serve to optimize ribosomal fidelity. The polypeptide is Dual-specificity RNA methyltransferase RlmN (Vibrio cholerae serotype O1 (strain M66-2)).